A 59-amino-acid polypeptide reads, in one-letter code: Protein translocase subunit SecE (59 aa).

A helical membrane pass occupies residues 30-50 (ITVISTVIFFVIFFALLDTGI).

The protein belongs to the SecE/SEC61-gamma family. As to quaternary structure, component of the Sec protein translocase complex. Heterotrimer consisting of SecY, SecE and SecG subunits. The heterotrimers can form oligomers, although 1 heterotrimer is thought to be able to translocate proteins. Interacts with the ribosome. Interacts with SecDF, and other proteins may be involved. Interacts with SecA.

Its subcellular location is the cell membrane. Essential subunit of the Sec protein translocation channel SecYEG. Clamps together the 2 halves of SecY. May contact the channel plug during translocation. This chain is Protein translocase subunit SecE, found in Bacillus subtilis (strain 168).